The chain runs to 971 residues: uncharacterized protein (971 aa).

The next 13 membrane-spanning stretches (helical) occupy residues 11–31, 516–536, 547–567, 569–589, 615–635, 651–671, 727–747, 763–783, 795–815, 817–837, 878–898, 900–920, and 923–943; these read WLLK…GIIF, FASS…ALGI, LALA…GGVV, VFSF…LITL, FFTM…VIYL, AITS…LFVS, LLFI…LYLG, STGI…YSLP, IALI…NFIF, IDQS…FFQA, IGSS…FGGI, GTIN…SVFV, and LPLF…YVQI.

It is found in the cell membrane. This is an uncharacterized protein from Mycoplasma pneumoniae (strain ATCC 29342 / M129 / Subtype 1) (Mycoplasmoides pneumoniae).